The chain runs to 320 residues: Ribose-phosphate pyrophosphokinase (320 aa).

41–43 contacts ATP; it reads NDN. Mg(2+) is bound by residues histidine 134 and aspartate 175. Residue lysine 198 is part of the active site. D-ribose 5-phosphate is bound by residues arginine 200 and aspartate 224.

This sequence belongs to the ribose-phosphate pyrophosphokinase family. Class I subfamily. Homohexamer. Mg(2+) is required as a cofactor.

The protein resides in the cytoplasm. It carries out the reaction D-ribose 5-phosphate + ATP = 5-phospho-alpha-D-ribose 1-diphosphate + AMP + H(+). It functions in the pathway metabolic intermediate biosynthesis; 5-phospho-alpha-D-ribose 1-diphosphate biosynthesis; 5-phospho-alpha-D-ribose 1-diphosphate from D-ribose 5-phosphate (route I): step 1/1. Involved in the biosynthesis of the central metabolite phospho-alpha-D-ribosyl-1-pyrophosphate (PRPP) via the transfer of pyrophosphoryl group from ATP to 1-hydroxyl of ribose-5-phosphate (Rib-5-P). The chain is Ribose-phosphate pyrophosphokinase from Deinococcus radiodurans (strain ATCC 13939 / DSM 20539 / JCM 16871 / CCUG 27074 / LMG 4051 / NBRC 15346 / NCIMB 9279 / VKM B-1422 / R1).